The sequence spans 439 residues: Adenylosuccinate synthetase (439 aa).

Residues 14-20 (GDEGKGK) and 42-44 (GHT) contribute to the GTP site. The active-site Proton acceptor is D15. Residues D15 and G42 each coordinate Mg(2+). Residues 15–18 (DEGK), 40–43 (NAGH), T130, R144, Q225, T240, and R304 contribute to the IMP site. Catalysis depends on H43, which acts as the Proton donor. 300 to 306 (TTTGRRR) contacts substrate. Residues R306, 332–334 (KLD), and 414–416 (SLG) each bind GTP.

The protein belongs to the adenylosuccinate synthetase family. Homodimer. Mg(2+) is required as a cofactor.

It localises to the cytoplasm. It carries out the reaction IMP + L-aspartate + GTP = N(6)-(1,2-dicarboxyethyl)-AMP + GDP + phosphate + 2 H(+). Its pathway is purine metabolism; AMP biosynthesis via de novo pathway; AMP from IMP: step 1/2. Plays an important role in the de novo pathway of purine nucleotide biosynthesis. Catalyzes the first committed step in the biosynthesis of AMP from IMP. The chain is Adenylosuccinate synthetase from Synechococcus sp. (strain CC9902).